The sequence spans 832 residues: Cation/H(+) antiporter 21 (832 aa).

Transmembrane regions (helical) follow at residues Ile33–Tyr55, Leu61–Leu81, Leu99–Leu119, Val132–Leu152, Ile161–Ala181, Cys200–Phe220, Ser236–Phe256, Ile278–Phe298, Phe319–Gly339, Val352–Leu372, Gly379–Ala399, and His413–Tyr433. Polar residues predominate over residues Arg792–Pro802. A disordered region spans residues Arg792–Arg832.

It belongs to the monovalent cation:proton antiporter 2 (CPA2) transporter (TC 2.A.37) family. CHX (TC 2.A.37.4) subfamily. In terms of tissue distribution, specifically expressed in root endodermal cells. Expressed in seedlings, roots, leaves, flowers, flower buds and pollen.

It is found in the cell membrane. Its function is as follows. Operates as a Na(+)/H(+) antiporter that plays a role in regulation of xylem Na(+) concentration and, consequently, Na(+) accumulation in the leaf. Required for pollen tube guidance, but not for normal pollen development. May also be involved in the development or function of the female gametophyte. This Arabidopsis thaliana (Mouse-ear cress) protein is Cation/H(+) antiporter 21 (CHX21).